Here is a 1414-residue protein sequence, read N- to C-terminus: DNA-directed RNA polymerase subunit beta'' (1414 aa).

Residues Cys-220, Cys-293, Cys-300, and Cys-303 each contribute to the Zn(2+) site.

This sequence belongs to the RNA polymerase beta' chain family. RpoC2 subfamily. In plastids the minimal PEP RNA polymerase catalytic core is composed of four subunits: alpha, beta, beta', and beta''. When a (nuclear-encoded) sigma factor is associated with the core the holoenzyme is formed, which can initiate transcription. Zn(2+) is required as a cofactor.

Its subcellular location is the plastid. It localises to the chloroplast. It catalyses the reaction RNA(n) + a ribonucleoside 5'-triphosphate = RNA(n+1) + diphosphate. In terms of biological role, DNA-dependent RNA polymerase catalyzes the transcription of DNA into RNA using the four ribonucleoside triphosphates as substrates. The sequence is that of DNA-directed RNA polymerase subunit beta'' from Angiopteris evecta (Mule's foot fern).